The chain runs to 150 residues: Myeloid-derived growth factor homolog (150 aa).

The first 22 residues, 1 to 22 (MTFLKYLLILCTIFLMVTNSLS), serve as a signal peptide directing secretion.

The protein belongs to the MYDGF family.

It localises to the secreted. In Dictyostelium discoideum (Social amoeba), this protein is Myeloid-derived growth factor homolog.